We begin with the raw amino-acid sequence, 1576 residues long: Protein Shroom (1576 aa).

Disordered stretches follow at residues 1–31 (MKMR…ENNN), 46–100 (SNGA…TQAG), 112–142 (YDQT…DSTS), 187–244 (RQSH…SSTE), 267–434 (ISES…ISVT), 589–609 (VERQ…HSQS), and 621–660 (PNNL…SLLP). The span at 10 to 21 (GNGSEMGESTKS) shows a compositional bias: polar residues. Composition is skewed to low complexity over residues 46 to 69 (SNGA…AGSV), 76 to 91 (HNSS…GSSL), and 128 to 142 (SEGY…DSTS). The segment covering 189 to 211 (SHSHSHSHAHSHSNSHGHSHGHA) has biased composition (basic residues). Low complexity-rich tracts occupy residues 212 to 244 (HSAS…SSTE) and 267 to 283 (ISES…SSRV). Residues 305–317 (DSSPTASNSSQMM) are compositionally biased toward polar residues. Positions 376 to 388 (QSTLSTQSSLLEL) are enriched in low complexity. Residues 399–415 (MGQSHSMGDLQQKNPHQ) show a composition bias toward polar residues. Residue serine 404 is modified to Phosphoserine. Positions 445 to 920 (APQPPAGKPS…LESNQQKRSN (476 aa)) are F-actin binding region required for planar polarity and cortical localization. Residues 633–643 (TGSNSASTRDC) show a composition bias toward polar residues. A phosphoserine mark is found at serine 667 and serine 668. Disordered regions lie at residues 699–728 (ISFN…SSAT), 743–823 (AALA…NCFA), 849–876 (VPKK…HHAT), 910–939 (NLES…NTDP), 1036–1055 (GYGK…SQSY), 1091–1116 (PTAT…SHSD), and 1210–1244 (SFAN…DVHD). The segment covering 748–759 (QQHHPQQHRHAQ) has biased composition (basic residues). Over residues 798 to 816 (PLPPPPPPEVLQPRPPPSP) the composition is skewed to pro residues. 2 stretches are compositionally biased toward polar residues: residues 910 to 923 (NLES…NSKA) and 1042 to 1055 (KPVT…SQSY). Pro residues-rich tracts occupy residues 1094–1108 (TPTP…PPRL) and 1217–1229 (MTPP…PPPL). The span at 1230 to 1239 (EPEEEEEQEE) shows a compositional bias: acidic residues. Residues 1232–1296 (EEEEEQEEND…LEAAREEHQT (65 aa)) adopt a coiled-coil conformation. The 268-residue stretch at 1305–1572 (RQPIELDYEQ…QLSSLSDALV (268 aa)) folds into the ASD2 domain.

It belongs to the shroom family. In terms of assembly, monomer or homodimer. Interacts with Rok. As to quaternary structure, binds (via N-terminus) to F-actin.

It localises to the cell junction. It is found in the adherens junction. The protein resides in the cytoplasm. The protein localises to the cytoskeleton. Its subcellular location is the apical cell membrane. Functionally, binds to Rho-kinase Rok and targets it to the apical cell cortex where it mediates apical constriction. During embryogenic axis elongation, required for the localization to adherens junctions and the establishment of planar polarization of both Rho-kinase Rok and myosin regulatory light chain sqh. May be involved in the assembly of microtubule arrays during cell elongation. The polypeptide is Protein Shroom (Drosophila melanogaster (Fruit fly)).